A 452-amino-acid chain; its full sequence is Pup--protein ligase (452 aa).

Glutamate 9 serves as a coordination point for Mg(2+). Arginine 53 contributes to the ATP binding site. Tyrosine 55 is a Mg(2+) binding site. Residue aspartate 57 is the Proton acceptor of the active site. Glutamate 63 is a binding site for Mg(2+). The ATP site is built by threonine 66 and tryptophan 419.

Belongs to the Pup ligase/Pup deamidase family. Pup-conjugating enzyme subfamily.

It catalyses the reaction ATP + [prokaryotic ubiquitin-like protein]-L-glutamate + [protein]-L-lysine = ADP + phosphate + N(6)-([prokaryotic ubiquitin-like protein]-gamma-L-glutamyl)-[protein]-L-lysine.. The protein operates within protein degradation; proteasomal Pup-dependent pathway. It functions in the pathway protein modification; protein pupylation. Catalyzes the covalent attachment of the prokaryotic ubiquitin-like protein modifier Pup to the proteasomal substrate proteins, thereby targeting them for proteasomal degradation. This tagging system is termed pupylation. The ligation reaction involves the side-chain carboxylate of the C-terminal glutamate of Pup and the side-chain amino group of a substrate lysine. This is Pup--protein ligase from Frankia alni (strain DSM 45986 / CECT 9034 / ACN14a).